A 477-amino-acid chain; its full sequence is Probable cytosolic Fe-S cluster assembly factor CG17683 (477 aa).

[4Fe-4S] cluster-binding residues include cysteine 23, cysteine 68, cysteine 71, cysteine 74, cysteine 187, cysteine 243, cysteine 395, and cysteine 399.

It belongs to the NARF family.

Component of the cytosolic iron-sulfur (Fe/S) protein assembly machinery. Required for maturation of extramitochondrial Fe/S proteins. The sequence is that of Probable cytosolic Fe-S cluster assembly factor CG17683 from Drosophila melanogaster (Fruit fly).